A 309-amino-acid polypeptide reads, in one-letter code: Protoheme IX farnesyltransferase (309 aa).

9 helical membrane-spanning segments follow: residues 35–55 (IGIV…AFYF), 64–84 (LHLV…SCAI), 114–134 (VLWL…MTTV), 135–155 (TAAV…TLWT), 161–181 (INTV…WTAV), 187–207 (IVPL…FLAL), 231–251 (MTKR…FYLF), 253–273 (LGVP…LLGL), and 289–309 (FVYS…ATLW).

Belongs to the UbiA prenyltransferase family. Protoheme IX farnesyltransferase subfamily. Interacts with CtaA.

It is found in the cell membrane. It carries out the reaction heme b + (2E,6E)-farnesyl diphosphate + H2O = Fe(II)-heme o + diphosphate. It participates in porphyrin-containing compound metabolism; heme O biosynthesis; heme O from protoheme: step 1/1. Converts heme B (protoheme IX) to heme O by substitution of the vinyl group on carbon 2 of heme B porphyrin ring with a hydroxyethyl farnesyl side group. This is Protoheme IX farnesyltransferase from Geobacillus kaustophilus (strain HTA426).